Reading from the N-terminus, the 586-residue chain is A-type ATP synthase subunit A (586 aa).

233 to 240 (GPFGSGKT) contributes to the ATP binding site.

Belongs to the ATPase alpha/beta chains family. Has multiple subunits with at least A(3), B(3), C, D, E, F, H, I and proteolipid K(x).

It is found in the cell membrane. It carries out the reaction ATP + H2O + 4 H(+)(in) = ADP + phosphate + 5 H(+)(out). Its function is as follows. Component of the A-type ATP synthase that produces ATP from ADP in the presence of a proton gradient across the membrane. The A chain is the catalytic subunit. The chain is A-type ATP synthase subunit A from Methanococcus aeolicus (strain ATCC BAA-1280 / DSM 17508 / OCM 812 / Nankai-3).